A 155-amino-acid chain; its full sequence is MFTIDFSDHTGLVKDAWYKQIEDLLEFAKKEEHIEDDAELSVTFVDKQEIQEINRTYRDKDKVTDVISFALEEDEPEIDFSGLDIPRVLGDIIICTDVAQEQANNYGHSFERELGFLALHGFLHLLGYDHMTEADEKEMFGRQDTILNAYGLTRG.

Zn(2+)-binding residues include His-120, His-124, and His-130.

Belongs to the endoribonuclease YbeY family. Zn(2+) serves as cofactor.

Its subcellular location is the cytoplasm. Functionally, single strand-specific metallo-endoribonuclease involved in late-stage 70S ribosome quality control and in maturation of the 3' terminus of the 16S rRNA. This chain is Endoribonuclease YbeY, found in Staphylococcus aureus (strain MSSA476).